The sequence spans 130 residues: Capsid protein (130 aa).

The viral RNA-binding stretch occupies residues 32–105 (EWISSNSRSQ…FATNSDCELI (74 aa)).

This sequence belongs to the Leviviricetes capsid protein family. As to quaternary structure, homodimer. The capsid proteins form dimers that assemble by group of 5. Twelve such pentamers are linked together with free dimers. The homodimers binds to the viral RNA via an operator hairpin, but also to many other RNA sequences in the viral genome; this interaction probably shifts the virus from the replicative to the assembly phase and ensures specific encapsidation of the viral genome.

It localises to the virion. Capsid protein self-assembles to form an icosahedral capsid with a T=3 symmetry, about 26 nm in diameter, and consisting of 89 capsid proteins dimers (178 capsid proteins). Involved in viral genome encapsidation through the interaction between a capsid protein dimer and the multiple packaging signals present in the RNA genome. The capsid also contains 1 copy of the A2 maturation protein. Its function is as follows. Acts as a translational repressor of viral replicase synthesis late in infection. This latter function is the result of capsid protein interaction with an RNA hairpin which contains the replicase ribosome-binding site. This Enterobacteria phage ZR (Bacteriophage ZR) protein is Capsid protein.